A 714-amino-acid polypeptide reads, in one-letter code: Hormonally up-regulated neu tumor-associated kinase (714 aa).

A compositionally biased stretch (low complexity) spans 1–15 (MPAAAGDGLLGEPAA). Residues 1–26 (MPAAAGDGLLGEPAAPGGGGGAEDAA) are disordered. Residues 62 to 320 (LIGSRKLGEG…IQQALANRWL (259 aa)) form the Protein kinase domain. Residues 68-76 (LGEGSFAKV) and K91 contribute to the ATP site. Residue D186 is the Proton acceptor of the active site. A compositionally biased stretch (basic and acidic residues) spans 437-461 (KKPKEQEKRGDFLHRPFSKKLDKNL). Disordered stretches follow at residues 437–471 (KKPK…SGSL), 518–552 (MEFI…HKED), and 590–615 (ARRN…HTPL). The segment covering 599–611 (LSPGLPSGSMSPL) has biased composition (low complexity).

This sequence belongs to the protein kinase superfamily. CAMK Ser/Thr protein kinase family. SNF1 subfamily.

The enzyme catalyses L-seryl-[protein] + ATP = O-phospho-L-seryl-[protein] + ADP + H(+). It carries out the reaction L-threonyl-[protein] + ATP = O-phospho-L-threonyl-[protein] + ADP + H(+). In Homo sapiens (Human), this protein is Hormonally up-regulated neu tumor-associated kinase (HUNK).